The chain runs to 535 residues: CTP synthase (535 aa).

The interval 1 to 267 (MTKYIFVTGG…DQIVCDHLKL (267 aa)) is amidoligase domain. Serine 13 contributes to the CTP binding site. Serine 13 lines the UTP pocket. 14-19 (SLGKGI) lines the ATP pocket. Residue tyrosine 54 participates in L-glutamine binding. Aspartate 71 lines the ATP pocket. Mg(2+) is bound by residues aspartate 71 and glutamate 141. CTP-binding positions include 148–150 (DIE), 188–193 (KTKPTQ), and lysine 224. Residues 188–193 (KTKPTQ) and lysine 224 contribute to the UTP site. 240 to 242 (RDA) is a binding site for ATP. The Glutamine amidotransferase type-1 domain maps to 292–534 (KIALVGKYVE…VRASITNKES (243 aa)). L-glutamine is bound at residue glycine 354. The active-site Nucleophile; for glutamine hydrolysis is cysteine 381. L-glutamine contacts are provided by residues 382-385 (LGMQ), glutamate 405, and arginine 462. Catalysis depends on residues histidine 507 and glutamate 509.

It belongs to the CTP synthase family. In terms of assembly, homotetramer.

It carries out the reaction UTP + L-glutamine + ATP + H2O = CTP + L-glutamate + ADP + phosphate + 2 H(+). It catalyses the reaction L-glutamine + H2O = L-glutamate + NH4(+). The catalysed reaction is UTP + NH4(+) + ATP = CTP + ADP + phosphate + 2 H(+). It participates in pyrimidine metabolism; CTP biosynthesis via de novo pathway; CTP from UDP: step 2/2. With respect to regulation, allosterically activated by GTP, when glutamine is the substrate; GTP has no effect on the reaction when ammonia is the substrate. The allosteric effector GTP functions by stabilizing the protein conformation that binds the tetrahedral intermediate(s) formed during glutamine hydrolysis. Inhibited by the product CTP, via allosteric rather than competitive inhibition. Catalyzes the ATP-dependent amination of UTP to CTP with either L-glutamine or ammonia as the source of nitrogen. Regulates intracellular CTP levels through interactions with the four ribonucleotide triphosphates. This is CTP synthase from Bacillus cereus (strain ATCC 10987 / NRS 248).